Consider the following 917-residue polypeptide: Gamma-tubulin complex component 3 (917 aa).

This sequence belongs to the TUBGCP family. Gamma-tubulin small complex (Gamma TuSC) is a heterotetrameric complex which contains two molecules of gamma-tubulin, and one molecule each of Dgrip84 and Dgrip91. The gamma-tubulin in this complex binds preferentially to GDP over GTP.

The protein resides in the cytoplasm. The protein localises to the cytoskeleton. It localises to the microtubule organizing center. It is found in the centrosome. Its subcellular location is the perinuclear region. This chain is Gamma-tubulin complex component 3, found in Drosophila melanogaster (Fruit fly).